The following is a 221-amino-acid chain: Cytidylate kinase (221 aa).

11 to 19 (GPSGVGKST) serves as a coordination point for ATP.

It belongs to the cytidylate kinase family. Type 1 subfamily.

The protein localises to the cytoplasm. It catalyses the reaction CMP + ATP = CDP + ADP. The catalysed reaction is dCMP + ATP = dCDP + ADP. The sequence is that of Cytidylate kinase from Mycoplasmopsis pulmonis (strain UAB CTIP) (Mycoplasma pulmonis).